We begin with the raw amino-acid sequence, 147 residues long: HTH-type transcriptional regulator MgrA (147 aa).

Residues 8–139 (KEQLCFSLYN…LNRLLGKVIH (132 aa)) enclose the HTH marR-type domain. The H-T-H motif DNA-binding region spans 55-78 (VKKVVTELALDTGTVSPLLKRMEQ).

The protein resides in the cytoplasm. Regulatory protein involved in autolytic activity, multidrug resistance and virulence. Controls autolysis by inactivating LytM, LytN (autolysins) and SarV (autolysis activator) and activating ArlRS, LrgAB and LytSR (autolysis inhibitors). Acts as a dual regulator for resistance to multiple drugs by inactivating NorB and tet38 and activating NorA. Positively controls the expression of virulence accessory gene regulator (agr) to promote alpha-hemolysin (hla) transcription and down-regulates staphylococcal accessory regulator (sarS), leading to repression of surface protein A (spa). Binds directly to hla promoter to augment its activation. Binds to sarS promoter to down-regulate spa expression. The chain is HTH-type transcriptional regulator MgrA (mgrA) from Staphylococcus aureus (strain NCTC 8325 / PS 47).